Reading from the N-terminus, the 326-residue chain is Triacylglycerol lipase 2 (326 aa).

Positions A142–G146 match the (A/G)XSXG lipase motif motif.

Interacts with MIA40; forms mixed disulfide intermediates with MIA40.

It is found in the mitochondrion. Its subcellular location is the mitochondrion intermembrane space. The enzyme catalyses a triacylglycerol + H2O = a diacylglycerol + a fatty acid + H(+). It carries out the reaction 1,2,3-tri-(9Z-octadecenoyl)-glycerol + H2O = di-(9Z)-octadecenoylglycerol + (9Z)-octadecenoate + H(+). It catalyses the reaction 1,2,3-tributanoylglycerol + H2O = dibutanoylglycerol + butanoate + H(+). The catalysed reaction is 1,2,3-trioctanoylglycerol + H2O = dioctanoylglycerol + octanoate + H(+). The enzyme catalyses di-(9Z)-octadecenoylglycerol + H2O = (9Z-octadecenoyl)-glycerol + (9Z)-octadecenoate + H(+). It carries out the reaction dioctanoylglycerol + H2O = octanoylglycerol + octanoate + H(+). Its function is as follows. Mitochondrial triacylglycerol (TAG) lipase with activity toward long-chain diacylglycerols (DAGs) and triacylglycerols (TAGs). Involved in mitochondrial lipid metabolism. The sequence is that of Triacylglycerol lipase 2 (TGL2) from Saccharomyces cerevisiae (strain ATCC 204508 / S288c) (Baker's yeast).